The primary structure comprises 595 residues: P2X purinoceptor 7 (595 aa).

Topologically, residues 1–22 are cytoplasmic; it reads MPACCSCSDVFQYETNKVTRIQ. Cys4 carries S-palmitoyl cysteine lipidation. Residues 23–46 traverse the membrane as a helical segment; the sequence is SMNYGTIKWFFHVIIFSYVCFALV. Over 47 to 328 the chain is Extracellular; it reads SDKLYQRKEP…ILVFGTGGKF (282 aa). 3 cysteine pairs are disulfide-bonded: Cys119–Cys168, Cys129–Cys152, and Cys135–Cys162. 2 positions are modified to ADP-ribosylarginine: Arg125 and Arg133. Residue Asn187 is glycosylated (N-linked (GlcNAc...) asparagine). Position 189 (Thr189) interacts with ATP. Residues Asn202 and Asn213 are each glycosylated (N-linked (GlcNAc...) asparagine). Cys216 and Cys226 form a disulfide bridge. Asn241 carries N-linked (GlcNAc...) asparagine glycosylation. A disulfide bridge connects residues Cys260 and Cys269. N-linked (GlcNAc...) asparagine glycosylation occurs at Asn284. Residues Arg294 and Lys311 each coordinate ATP. A helical membrane pass occupies residues 329–353; it reads DIIQLVVYIGSTLSYFGLAAVFIDF. A Na(+)-binding site is contributed by Ser342. Tyr343 is subject to Phosphotyrosine. At 354–595 the chain is on the cytoplasmic side; that stretch reads LIDTYSSNCC…GQYSGFKSPY (242 aa). Residues 360–377 form a C-cys anchor region; the sequence is SNCCRSHIYPWCKCCQPC. 4 S-palmitoyl cysteine lipidation sites follow: Cys362, Cys363, Cys374, and Cys377. Position 390 is a phosphoserine (Ser390). The segment at 395-595 is cytoplasmic ballast; sequence KPTLKYVSFV…GQYSGFKSPY (201 aa). Cys479, Cys499, and Cys506 together coordinate Zn(2+). The GTP site is built by Arg546, His547, Tyr550, and Ala567. Cys572 serves as a coordination point for Zn(2+). 3 residues coordinate GTP: Lys583, Ser589, and Gly590.

This sequence belongs to the P2X receptor family. In terms of assembly, homotrimers. Interacts with LAMA3, ITGB2, ACTB, ACTN4, SVIL, MPP3, HSPA1, HSPCB, HSPA8, PIK230 and PTPRB. Interacts (via C-terminus) with EMP2. Interacts with isoform B; this interaction potentiates P2RX7 responses. Post-translationally, phosphorylation results in its inactivation. In terms of processing, ADP-ribosylation at Arg-125 is necessary and sufficient to activate P2RX7 and gate the channel. Palmitoylation of several cysteines in the C-terminal cytoplasmic tail is required for efficient localization to cell surface. Palmitoylation prevents channel desensitization by physically anchoring the palmitoylated groups to the membrane. Widely expressed with highest levels in brain and immune tissues. As to expression, predominant form in many tissues.

It localises to the cell membrane. It catalyses the reaction Ca(2+)(in) = Ca(2+)(out). The enzyme catalyses K(+)(in) = K(+)(out). It carries out the reaction Na(+)(in) = Na(+)(out). Its activity is regulated as follows. Activated by high extracellular ATP levels (0.1-2.5 mM). The synthetic analog 2'(3')-O-(4-benzoylbenzoyl)ATP (BzATP) acts as a potent agonist. Does not undergo desensitization, instead, undergoes a facilitation process where currents progressively increase with repetitive or prolonged agonist application. Palmitoylation prevents channel desensitization. The permeability of the P2RX7 channel is modulated by the amount of cholesterol in the plasma membrane. Its function is as follows. ATP-gated nonselective transmembrane cation channel that requires high millimolar concentrations of ATP for activation. Upon ATP binding, it rapidly opens to allow the influx of small cations Na(+) and Ca(2+), and the K(+) efflux. Also has the ability to form a large pore in the cell membrane, allowing the passage of large cationic molecules. In microglia, may mediate NADPH transport across the plasma membrane. In immune cells, P2RX7 acts as a molecular sensor in pathological inflammatory states by detecting and responding to high local concentrations of extracellar ATP. In microglial cells, P2RX7 activation leads to the release of pro-inflammatory cytokines, such as IL-1beta and IL-18, through the activation of the NLRP3 inflammasome and caspase-1. Cooperates with KCNK6 to activate NLRP3 inflammasome. Activates death pathways leading to apoptosis and autophagy. Activates death pathways leading to pyroptosis. In terms of biological role, shows ion channel activity but no macropore function. Functionally, non-functional channel. This is P2X purinoceptor 7 (P2RX7) from Homo sapiens (Human).